The chain runs to 369 residues: 2-aminoethylphosphonate--pyruvate transaminase (369 aa).

Lysine 193 carries the post-translational modification N6-(pyridoxal phosphate)lysine.

The protein belongs to the class-V pyridoxal-phosphate-dependent aminotransferase family. PhnW subfamily. As to quaternary structure, homodimer. Requires pyridoxal 5'-phosphate as cofactor.

It catalyses the reaction (2-aminoethyl)phosphonate + pyruvate = phosphonoacetaldehyde + L-alanine. Functionally, involved in phosphonate degradation. The protein is 2-aminoethylphosphonate--pyruvate transaminase of Burkholderia pseudomallei (strain 668).